The chain runs to 663 residues: Transmembrane 9 superfamily member 2 (663 aa).

Residues 1–28 form the signal peptide; sequence MSSRPPASLPARGPRLLLLSLLLLGTVP. At 29-300 the chain is on the lumenal side; the sequence is GPRPGSAFYL…LESMPHTHIQ (272 aa). A helical membrane pass occupies residues 301–321; sequence WFSIMNSLVIVLFLSGMVAMI. Residues 322–374 are Cytoplasmic-facing; it reads MLRTLHKDIARYNQMDSTEDAQEEFGWKLVHGDIFRPPRKGMLLSVFLGSGTQ. A helical transmembrane segment spans residues 375–395; that stretch reads ILIMTFVTLFFACLGFLSPAN. Residues 396–398 lie on the Lumenal side of the membrane; sequence RGA. The chain crosses the membrane as a helical span at residues 399–419; that stretch reads LMTCAVVLWVLLGTPAGYVAA. Over 420 to 437 the chain is Cytoplasmic; the sequence is RFYKSFGGEKWKTNVLLT. The helical transmembrane segment at 438–458 threads the bilayer; it reads SFLCPGIVFADFFIMNLILWG. The Lumenal segment spans residues 459-466; that stretch reads EGSSAAIP. A helical membrane pass occupies residues 467–487; sequence FGTLVAILALWFCISVPLTFI. At 488-522 the chain is on the cytoplasmic side; that stretch reads GAYFGFKKNAIEHPVRTNQIPRQIPEQSFYTKPLP. A helical membrane pass occupies residues 523–543; sequence GIIMGGILPFGCIFIQLFFIL. The Lumenal segment spans residues 544–554; that stretch reads NSIWSHQMYYM. Residues 555–575 form a helical membrane-spanning segment; the sequence is FGFLFLVFIILVITCSEATIL. Residues 576–591 are Cytoplasmic-facing; that stretch reads LCYFHLCAEDYHWQWR. The chain crosses the membrane as a helical span at residues 592–612; that stretch reads SFLTSGFTAVYFLVYAIHYFF. The Lumenal segment spans residues 613-631; sequence SKLQITGTASTILYFGYTM. Residues 632 to 652 traverse the membrane as a helical segment; it reads IMVLIFFLFTGTIGFFACFWF. At 653-663 the chain is on the cytoplasmic side; sequence VTKIYSVVKVD.

Belongs to the nonaspanin (TM9SF) (TC 9.A.2) family.

The protein localises to the endosome membrane. It localises to the golgi outpost. The protein resides in the cytoplasm. It is found in the cytoskeleton. Its subcellular location is the microtubule organizing center. In terms of biological role, in the intracellular compartments, may function as a channel or small molecule transporter. This chain is Transmembrane 9 superfamily member 2 (Tm9sf2), found in Rattus norvegicus (Rat).